A 122-amino-acid chain; its full sequence is Basic phospholipase A2 vipoxin B chain (122 aa).

Cystine bridges form between cysteine 26–cysteine 115, cysteine 28–cysteine 44, cysteine 43–cysteine 95, cysteine 49–cysteine 122, cysteine 50–cysteine 88, cysteine 57–cysteine 81, and cysteine 75–cysteine 86. Ca(2+)-binding residues include tyrosine 27, glycine 29, and glycine 31. Histidine 47 is a catalytic residue. Aspartate 48 is a Ca(2+) binding site. The active site involves aspartate 89.

The protein belongs to the phospholipase A2 family. Group II subfamily. D49 sub-subfamily. As to quaternary structure, heterodimer of A (AC P04084) and B chains; non-covalently linked. The A chain (acidic) is non-toxic, and increases the toxicity of the B chain (basic). The A chain may act as factor stabilizing the complex structure and hence retaining its toxicity by preventing non-specific binding. Upon binding to the target membranes the A chain is postulated to dissociate. Ca(2+) is required as a cofactor. In terms of tissue distribution, expressed by the venom gland.

It localises to the secreted. The enzyme catalyses a 1,2-diacyl-sn-glycero-3-phosphocholine + H2O = a 1-acyl-sn-glycero-3-phosphocholine + a fatty acid + H(+). In terms of biological role, heterodimer: postsynaptic neurotoxin. Monomer: snake venom phospholipase A2 (PLA2) that shows hemolytic activity and inhibition of platelet aggregation. The hemolytic activity occurs only in presence of fatty acids (unsaturated fatty acids facilitate induce a strong hemolytic activity, whereas saturated fatty acids induce a slight activity). The inhibition of platelet aggregation is almost maximal when aggregation is induced by collagen, and arachidonic acid, whereas it is only of 30% when the aggregation is induced by ADP. PLA2 catalyzes the calcium-dependent hydrolysis of the 2-acyl groups in 3-sn-phosphoglycerides. In Vipera ammodytes meridionalis (Eastern sand viper), this protein is Basic phospholipase A2 vipoxin B chain.